Here is a 235-residue protein sequence, read N- to C-terminus: Elongation factor Tu, chloroplastic (235 aa).

Residues 1–125 enclose the tr-type G domain; the sequence is KNMITGAAQM…SVDSYIPTPI (125 aa). 47–50 is a GTP binding site; the sequence is NKED.

The protein belongs to the TRAFAC class translation factor GTPase superfamily. Classic translation factor GTPase family. EF-Tu/EF-1A subfamily.

Its subcellular location is the plastid. It is found in the chloroplast. It catalyses the reaction GTP + H2O = GDP + phosphate + H(+). Its function is as follows. GTP hydrolase that promotes the GTP-dependent binding of aminoacyl-tRNA to the A-site of ribosomes during protein biosynthesis. This Costaria costata (Five-ribbed kelp) protein is Elongation factor Tu, chloroplastic (tufA).